An 803-amino-acid chain; its full sequence is Phenylalanine--tRNA ligase beta subunit (803 aa).

In terms of domain architecture, tRNA-binding spans 39–152 (TPGFQKVVAG…PDASPGADAA (114 aa)). The B5 domain maps to 406-480 (RQPVTIELRP…RLYGYNRIPV (75 aa)). Mg(2+) is bound by residues Asp-458, Asp-464, Glu-467, and Glu-468. Positions 709 to 802 (PRFPAVERDL…LEERLGASLR (94 aa)) constitute an FDX-ACB domain.

Belongs to the phenylalanyl-tRNA synthetase beta subunit family. Type 1 subfamily. In terms of assembly, tetramer of two alpha and two beta subunits. Mg(2+) serves as cofactor.

It is found in the cytoplasm. It carries out the reaction tRNA(Phe) + L-phenylalanine + ATP = L-phenylalanyl-tRNA(Phe) + AMP + diphosphate + H(+). The polypeptide is Phenylalanine--tRNA ligase beta subunit (Moorella thermoacetica (strain ATCC 39073 / JCM 9320)).